We begin with the raw amino-acid sequence, 614 residues long: WD repeat-containing protein 26 (614 aa).

Low complexity-rich tracts occupy residues 1–19 (MQAN…AGSG) and 34–44 (SNGVLSSNNGL). Positions 1–65 (MQANGAAAAA…PGGRKKKRLS (65 aa)) are disordered. The LisH domain maps to 67–99 (ADEDVIRLIGQHLHGLGLNQTVDLLMQESGCRL). Positions 100 to 184 (EHPSATKFRN…EYLEDGKVLE (85 aa)) constitute a CTLH domain. WD repeat units lie at residues 306–345 (EHCN…HQLK), 352–391 (GHAY…GELR), 397–437 (SHED…DSWE), 477–516 (QEDH…LVRK), 519–561 (GVTQ…PIAE), and 564–604 (GHTR…DNQE).

In terms of assembly, forms homooligomers. Identified in the CTLH complex that contains at least MAEA, RMND5A (or alternatively its paralog RMND5B), GID8, WDR26, and RANBP9 and/or RANBP10. Interacts with DDB1-CUL4A/B E3 ligase complexes.

The protein localises to the cytoplasm. It localises to the nucleus. The protein resides in the mitochondrion. G-beta-like protein involved in cell signal transduction. Acts as a negative regulator in MAPK signaling pathway. Functions as a scaffolding protein to promote G beta:gamma-mediated PLCB2 plasma membrane translocation and subsequent activation in leukocytes. Core component of the CTLH E3 ubiquitin-protein ligase complex that mediates ubiquitination and subsequent proteasomal degradation of target proteins. Acts as a negative regulator of the canonical Wnt signaling pathway through preventing ubiquitination of beta-catenin CTNNB1 by the beta-catenin destruction complex, thus negatively regulating CTNNB1 degradation. Serves as a scaffold to coordinate PI3K/AKT pathway-driven cell growth and migration. Protects cells from oxidative stress-induced apoptosis via the down-regulation of AP-1 transcriptional activity as well as by inhibiting cytochrome c release from mitochondria. Also protects cells by promoting hypoxia-mediated autophagy and mitophagy. The protein is WD repeat-containing protein 26 (wdr26) of Xenopus tropicalis (Western clawed frog).